Consider the following 341-residue polypeptide: Glyceraldehyde-3-phosphate dehydrogenase (341 aa).

NAD(+) is bound by residues 11–12 (TI) and Gly109. 138–140 (SCN) is a D-glyceraldehyde 3-phosphate binding site. The Nucleophile role is filled by Cys139. Arg167 is a binding site for NAD(+). D-glyceraldehyde 3-phosphate-binding positions include Thr169 and 192–193 (HA). Gln299 is an NAD(+) binding site.

This sequence belongs to the glyceraldehyde-3-phosphate dehydrogenase family. Homotetramer.

The protein localises to the cytoplasm. It carries out the reaction D-glyceraldehyde 3-phosphate + phosphate + NADP(+) = (2R)-3-phospho-glyceroyl phosphate + NADPH + H(+). The enzyme catalyses D-glyceraldehyde 3-phosphate + phosphate + NAD(+) = (2R)-3-phospho-glyceroyl phosphate + NADH + H(+). Its pathway is carbohydrate degradation; glycolysis; pyruvate from D-glyceraldehyde 3-phosphate: step 1/5. This is Glyceraldehyde-3-phosphate dehydrogenase from Picrophilus torridus (strain ATCC 700027 / DSM 9790 / JCM 10055 / NBRC 100828 / KAW 2/3).